The chain runs to 428 residues: UPF0597 protein PBPRB0240 (428 aa).

It belongs to the UPF0597 family.

This Photobacterium profundum (strain SS9) protein is UPF0597 protein PBPRB0240.